The primary structure comprises 264 residues: 3-methyl-2-oxobutanoate hydroxymethyltransferase (264 aa).

Residues aspartate 45 and aspartate 84 each contribute to the Mg(2+) site. 3-methyl-2-oxobutanoate contacts are provided by residues 45–46 (DS), aspartate 84, and lysine 112. Glutamate 114 serves as a coordination point for Mg(2+). The Proton acceptor role is filled by glutamate 181.

It belongs to the PanB family. Homodecamer; pentamer of dimers. The cofactor is Mg(2+).

It localises to the cytoplasm. It catalyses the reaction 3-methyl-2-oxobutanoate + (6R)-5,10-methylene-5,6,7,8-tetrahydrofolate + H2O = 2-dehydropantoate + (6S)-5,6,7,8-tetrahydrofolate. The protein operates within cofactor biosynthesis; (R)-pantothenate biosynthesis; (R)-pantoate from 3-methyl-2-oxobutanoate: step 1/2. Functionally, catalyzes the reversible reaction in which hydroxymethyl group from 5,10-methylenetetrahydrofolate is transferred onto alpha-ketoisovalerate to form ketopantoate. In Escherichia coli (strain 55989 / EAEC), this protein is 3-methyl-2-oxobutanoate hydroxymethyltransferase.